The chain runs to 87 residues: Down syndrome critical region protein 10 (87 aa).

This chain is Down syndrome critical region protein 10 (DSCR10), found in Pan troglodytes (Chimpanzee).